The chain runs to 452 residues: Nuclear distribution protein nudF 2 (452 aa).

Residues 76 to 101 (ALQILDLESKVAGLQAELSSLTLTSR) adopt a coiled-coil conformation. WD repeat units lie at residues 123-164 (SHRD…RTLK), 166-206 (HIRA…ANIR), 210-250 (GHDH…CVKV), 253-292 (SSDA…QKSA), 295-355 (GHEN…IKTL), 357-396 (GHDN…KLVK), and 401-449 (AHSH…SCVR).

Belongs to the WD repeat LIS1/nudF family. As to quaternary structure, self-associates. Interacts with nudE and dynein.

It localises to the cytoplasm. It is found in the cytoskeleton. The protein resides in the spindle pole. In terms of biological role, positively regulates the activity of the minus-end directed microtubule motor protein dynein. May enhance dynein-mediated microtubule sliding by targeting dynein to the microtubule plus end. Required for nuclear migration during vegetative growth as well as development. Required for retrograde early endosome (EE) transport from the hyphal tip. Required for localization of dynein to the mitotic spindle poles. Recruits additional proteins to the dynein complex at SPBs. The sequence is that of Nuclear distribution protein nudF 2 from Talaromyces marneffei (strain ATCC 18224 / CBS 334.59 / QM 7333) (Penicillium marneffei).